The primary structure comprises 838 residues: 1,4-alpha-glucan branching enzyme GlgB 1 (838 aa).

A compositionally biased stretch (basic and acidic residues) spans 1–11 (MIPRPPSDDRA). Disordered stretches follow at residues 1-98 (MIPR…VSKK) and 116-142 (PVSPAVAPDDRDRLLSGTHHAPHSVLG). The segment covering 29-57 (KKAAAAKKTAGKKATPAAKATAAKGAVTK) has biased composition (low complexity). The active-site Nucleophile is the aspartate 513. Glutamate 566 serves as the catalytic Proton donor. Positions 793 to 822 (TDGARYGGSDVTNPHPVKPEPQGRHGRPAS) are disordered.

It belongs to the glycosyl hydrolase 13 family. GlgB subfamily. As to quaternary structure, monomer.

It catalyses the reaction Transfers a segment of a (1-&gt;4)-alpha-D-glucan chain to a primary hydroxy group in a similar glucan chain.. It functions in the pathway glycan biosynthesis; glycogen biosynthesis. Functionally, catalyzes the formation of the alpha-1,6-glucosidic linkages in glycogen by scission of a 1,4-alpha-linked oligosaccharide from growing alpha-1,4-glucan chains and the subsequent attachment of the oligosaccharide to the alpha-1,6 position. The chain is 1,4-alpha-glucan branching enzyme GlgB 1 from Streptomyces avermitilis (strain ATCC 31267 / DSM 46492 / JCM 5070 / NBRC 14893 / NCIMB 12804 / NRRL 8165 / MA-4680).